The primary structure comprises 500 residues: Cytochrome P450 71B34 (500 aa).

A helical transmembrane segment spans residues 1–21 (MTNIWLLSLIFVICILVAVFN). Position 440 (cysteine 440) interacts with heme.

This sequence belongs to the cytochrome P450 family. It depends on heme as a cofactor.

The protein localises to the membrane. The protein is Cytochrome P450 71B34 (CYP71B34) of Arabidopsis thaliana (Mouse-ear cress).